The primary structure comprises 296 residues: 4-hydroxybenzoate octaprenyltransferase (296 aa).

The next 8 helical transmembrane spans lie at 29-49, 55-75, 102-122, 146-166, 169-189, 219-239, 241-261, and 275-295; these read IGIYLLLWPTLWSLWIAADGV, LLIFVLGVILMRAAGCVINDF, AWITFAVLVALSFGLVLLTNA, YYPQVVLGAAYSWGILMAFTA, GELPASAWLLFLANVLWTVAY, LIIGSLQGLTLLLLVLAGNRF, LGLCFYLGLAVAAACFVWEAW, and FLHNHWAGLAIFLGTVADYAL.

It belongs to the UbiA prenyltransferase family. It depends on Mg(2+) as a cofactor.

The protein resides in the cell inner membrane. It carries out the reaction all-trans-octaprenyl diphosphate + 4-hydroxybenzoate = 4-hydroxy-3-(all-trans-octaprenyl)benzoate + diphosphate. Its pathway is cofactor biosynthesis; ubiquinone biosynthesis. In terms of biological role, catalyzes the prenylation of para-hydroxybenzoate (PHB) with an all-trans polyprenyl group. Mediates the second step in the final reaction sequence of ubiquinone-8 (UQ-8) biosynthesis, which is the condensation of the polyisoprenoid side chain with PHB, generating the first membrane-bound Q intermediate 3-octaprenyl-4-hydroxybenzoate. This chain is 4-hydroxybenzoate octaprenyltransferase, found in Pseudomonas aeruginosa (strain LESB58).